Here is a 336-residue protein sequence, read N- to C-terminus: Succinylglutamate desuccinylase (336 aa).

Residues His-59, Glu-62, and His-151 each contribute to the Zn(2+) site. Glu-215 is a catalytic residue.

Belongs to the AspA/AstE family. Succinylglutamate desuccinylase subfamily. Zn(2+) serves as cofactor.

It carries out the reaction N-succinyl-L-glutamate + H2O = L-glutamate + succinate. Its pathway is amino-acid degradation; L-arginine degradation via AST pathway; L-glutamate and succinate from L-arginine: step 5/5. Functionally, transforms N(2)-succinylglutamate into succinate and glutamate. The sequence is that of Succinylglutamate desuccinylase from Pseudomonas fluorescens (strain Pf0-1).